The sequence spans 228 residues: Gliolectin (228 aa).

Topologically, residues 1 to 120 are cytoplasmic; it reads MLCPPMALGP…NPKAVSQAPR (120 aa). The helical; Signal-anchor for type II membrane protein transmembrane segment at 121–137 threads the bilayer; sequence GMALTPAQISASAKLIL. The Extracellular portion of the chain corresponds to 138–228; it reads QKCPESDRKK…GTSELADQKQ (91 aa). Positions 141–228 are disordered; that stretch reads PESDRKKSNG…GTSELADQKQ (88 aa). Asn-149, Asn-156, Asn-198, Asn-199, Asn-205, and Asn-218 each carry an N-linked (GlcNAc...) asparagine glycan. The segment covering 195-213 has biased composition (low complexity); it reads NNNNNSSSSNNNSNMNINN. Residues 218 to 228 show a composition bias toward polar residues; sequence NGTSELADQKQ.

Expressed by a subset of glial cells found at the midline of the embryo stage 12 nervous system. Expression is highest during the formation of the embryonic axonal commissures, a process requiring midline glial cell function (at protein level).

The protein resides in the membrane. Its function is as follows. Has a role in intercellular carbohydrate-mediated cell adhesion. This chain is Gliolectin, found in Drosophila melanogaster (Fruit fly).